The chain runs to 264 residues: S-adenosylmethionine decarboxylase proenzyme (264 aa).

Ser-112 acts as the Schiff-base intermediate with substrate; via pyruvic acid in catalysis. Position 112 is a pyruvic acid (Ser); by autocatalysis (Ser-112). His-117 functions as the Proton acceptor; for processing activity in the catalytic mechanism. The Proton donor; for catalytic activity role is filled by Cys-140.

It belongs to the prokaryotic AdoMetDC family. Type 2 subfamily. As to quaternary structure, heterooctamer of four alpha and four beta chains arranged as a tetramer of alpha/beta heterodimers. Pyruvate is required as a cofactor. In terms of processing, is synthesized initially as an inactive proenzyme. Formation of the active enzyme involves a self-maturation process in which the active site pyruvoyl group is generated from an internal serine residue via an autocatalytic post-translational modification. Two non-identical subunits are generated from the proenzyme in this reaction, and the pyruvate is formed at the N-terminus of the alpha chain, which is derived from the carboxyl end of the proenzyme. The post-translation cleavage follows an unusual pathway, termed non-hydrolytic serinolysis, in which the side chain hydroxyl group of the serine supplies its oxygen atom to form the C-terminus of the beta chain, while the remainder of the serine residue undergoes an oxidative deamination to produce ammonia and the pyruvoyl group blocking the N-terminus of the alpha chain.

The enzyme catalyses S-adenosyl-L-methionine + H(+) = S-adenosyl 3-(methylsulfanyl)propylamine + CO2. It participates in amine and polyamine biosynthesis; S-adenosylmethioninamine biosynthesis; S-adenosylmethioninamine from S-adenosyl-L-methionine: step 1/1. Its function is as follows. Catalyzes the decarboxylation of S-adenosylmethionine to S-adenosylmethioninamine (dcAdoMet), the propylamine donor required for the synthesis of the polyamines spermine and spermidine from the diamine putrescine. In Photorhabdus laumondii subsp. laumondii (strain DSM 15139 / CIP 105565 / TT01) (Photorhabdus luminescens subsp. laumondii), this protein is S-adenosylmethionine decarboxylase proenzyme.